The chain runs to 253 residues: Major prion protein (253 aa).

The signal sequence occupies residues 1-22; the sequence is MANLGCWMLVLFVATWSDLGLC. Positions 23–230 are interaction with GRB2, ERI3 and SYN1; the sequence is KKRPKPGGWN…ESQAYYQRGS (208 aa). The interval 26-108 is disordered; that stretch reads PKPGGWNTGG…WNKPSKPKTN (83 aa). 5 tandem repeats follow at residues 51–59, 60–67, 68–75, 76–83, and 84–91. The tract at residues 51-91 is 5 X 8 AA tandem repeats of P-H-G-G-G-W-G-Q; that stretch reads PQGGGGWGQPHGGGWGQPHGGGWGQPHGGGWGQPHGGGWGQ. The span at 52 to 95 shows a compositional bias: gly residues; it reads QGGGGWGQPHGGGWGQPHGGGWGQPHGGGWGQPHGGGWGQGGGT. The Cu(2+) site is built by H61, G62, G63, H69, G70, G71, H77, G78, G79, H85, G86, and G87. A disulfide bridge connects residues C179 and C214. 2 N-linked (GlcNAc...) asparagine glycosylation sites follow: N181 and N197. S230 is lipidated: GPI-anchor amidated serine. The propeptide at 231–253 is removed in mature form; that stretch reads SMVLFSSPPVILLISFLIFLIVG.

It belongs to the prion family. As to quaternary structure, monomer and homodimer. Has a tendency to aggregate into amyloid fibrils containing a cross-beta spine, formed by a steric zipper of superposed beta-strands. Soluble oligomers may represent an intermediate stage on the path to fibril formation. Copper binding may promote oligomerization. Interacts with GRB2, APP, ERI3/PRNPIP and SYN1. Mislocalized cytosolically exposed PrP interacts with MGRN1; this interaction alters MGRN1 subcellular location and causes lysosomal enlargement. Interacts with KIAA1191.

Its subcellular location is the cell membrane. The protein resides in the golgi apparatus. Functionally, its primary physiological function is unclear. Has cytoprotective activity against internal or environmental stresses. May play a role in neuronal development and synaptic plasticity. May be required for neuronal myelin sheath maintenance. May play a role in iron uptake and iron homeostasis. Soluble oligomers are toxic to cultured neuroblastoma cells and induce apoptosis (in vitro). Association with GPC1 (via its heparan sulfate chains) targets PRNP to lipid rafts. Also provides Cu(2+) or Zn(2+) for the ascorbate-mediated GPC1 deaminase degradation of its heparan sulfate side chains. In Hylobates lar (Lar gibbon), this protein is Major prion protein (PRNP).